The following is an 884-amino-acid chain: MAAEKTLQEYGVLCIQEYRKSSKVESSARNSFMGLKDHLGHDLGHLYMESTDPQMSAAVPWPMVEKPTMDTVNSGKEGKGVSEENVSSGDSEGSTSSDHESEQLSSLSVEPCSLTKTHRQLCRSPCLEPRLLKHSDILQDFKPEESQTPSKEVKKPPDVVREYQTKLEFALKLGYSEEQVQLVLNKLGTDALINDILGELVKLGNKSEADQTVSTINSVMRETSSLESQRSESPMQEVVVDDGENLRPVVIDGSNVAMSHGNKEVFSCRGIKLAVDWFLERGHKDITVFVPAWRKEQSRPDALITDQEILRKLEKEKILVFTPSRRVQGRRVVCYDDRFIVKLAFESDGIIVSNDNYRDLANEKPEWKKFIDERLLMYSFVNDKFMPPDDPLGRHGPSLDNFLRKKPIVPEHKKQPCPYGKKCTYGHKCKYYHPERGSQPQRSVADELRAMSRNTAAKTTNEGGLVKSNSVPCSTKADSTSDVKRGAPKRQSDPSIRTHVYQDIEEKLPTKNKLETRSVPSLVSIPATSTAKPQSTTPLSNGLPSGVHFPPQDQRPQGQYPPMMMATKNHGTPMPYEQYPKCDSPVDVGYYSMLNAYSNLSISGPRSPERRFSLDTDYRVNSVASDCSSEGSMSCGSSDSYVGYNDRSYVSSPDPQLEESLKCQHMHPHSRLNSQPFLQNFHDPLTRVQSYSHEEPKFHPKRPLPHLAMHLQHPAVGARSSCPGDYPSPPSSAHSKAPHLGRSLVATRIDSISDSRLYDSSPSRQRKPYSRQEGLGSWGRPSYGLEAYGYRQTYSLPDNSTPPCYESITFQSLPEQQEPTWRIPYCGMPHDPPRYQDNREKIFINLCNIFPPDLVRLVMKRNPHMTDAQQLAAAILVEKSQLGY.

The interval 66 to 108 is disordered; that stretch reads KPTMDTVNSGKEGKGVSEENVSSGDSEGSTSSDHESEQLSSLS. The span at 87–96 shows a compositional bias: low complexity; sequence SSGDSEGSTS. S231 is modified (phosphoserine). Residues 246–401 enclose the RNase NYN domain; sequence LRPVVIDGSN…LGRHGPSLDN (156 aa). A C3H1-type zinc finger spans residues 411–436; sequence EHKKQPCPYGKKCTYGHKCKYYHPER. A compositionally biased stretch (polar residues) spans 456–478; that stretch reads AAKTTNEGGLVKSNSVPCSTKAD. Disordered regions lie at residues 456–548, 716–739, and 755–776; these read AAKT…SGVH, VGARSSCPGDYPSPPSSAHSKAPH, and SRLYDSSPSRQRKPYSRQEGLG. Residues 500–516 show a composition bias toward basic and acidic residues; that stretch reads VYQDIEEKLPTKNKLET. Positions 518–543 are enriched in polar residues; that stretch reads SVPSLVSIPATSTAKPQSTTPLSNGL.

Belongs to the ZC3H12 family. Mg(2+) serves as cofactor.

Its function is as follows. May function as RNase and regulate the levels of target RNA species. This chain is Probable ribonuclease ZC3H12C (Zc3h12c), found in Mus musculus (Mouse).